Reading from the N-terminus, the 238-residue chain is 7-cyano-7-deazaguanine synthase (238 aa).

Residue 15–25 coordinates ATP; the sequence is FSGGQDSTTCL. Positions 203, 218, 221, and 224 each coordinate Zn(2+).

The protein belongs to the QueC family. Zn(2+) serves as cofactor.

It catalyses the reaction 7-carboxy-7-deazaguanine + NH4(+) + ATP = 7-cyano-7-deazaguanine + ADP + phosphate + H2O + H(+). It functions in the pathway purine metabolism; 7-cyano-7-deazaguanine biosynthesis. Catalyzes the ATP-dependent conversion of 7-carboxy-7-deazaguanine (CDG) to 7-cyano-7-deazaguanine (preQ(0)). In Alkalilimnicola ehrlichii (strain ATCC BAA-1101 / DSM 17681 / MLHE-1), this protein is 7-cyano-7-deazaguanine synthase.